The sequence spans 496 residues: Membrane-bound lytic murein transglycosylase F (496 aa).

The first 31 residues, 1–31 (MPIFSTRVLTYLRCIFRLFIGLTLLLTLVGC), serve as a signal peptide directing secretion. The tract at residues 32-271 (DFYTPSSQLE…KLDEKYFGHV (240 aa)) is non-LT domain. Positions 273–496 (NFDFVDTRTF…AEVVKQITLR (224 aa)) are LT domain. Glu-316 is a catalytic residue. The disordered stretch occupies residues 464 to 486 (HRREELDDDDSSEPPSAERPTVI).

The protein in the N-terminal section; belongs to the bacterial solute-binding protein 3 family. This sequence in the C-terminal section; belongs to the transglycosylase Slt family.

Its subcellular location is the cell outer membrane. It carries out the reaction Exolytic cleavage of the (1-&gt;4)-beta-glycosidic linkage between N-acetylmuramic acid (MurNAc) and N-acetylglucosamine (GlcNAc) residues in peptidoglycan, from either the reducing or the non-reducing ends of the peptidoglycan chains, with concomitant formation of a 1,6-anhydrobond in the MurNAc residue.. In terms of biological role, murein-degrading enzyme that degrades murein glycan strands and insoluble, high-molecular weight murein sacculi, with the concomitant formation of a 1,6-anhydromuramoyl product. Lytic transglycosylases (LTs) play an integral role in the metabolism of the peptidoglycan (PG) sacculus. Their lytic action creates space within the PG sacculus to allow for its expansion as well as for the insertion of various structures such as secretion systems and flagella. The chain is Membrane-bound lytic murein transglycosylase F from Aeromonas hydrophila subsp. hydrophila (strain ATCC 7966 / DSM 30187 / BCRC 13018 / CCUG 14551 / JCM 1027 / KCTC 2358 / NCIMB 9240 / NCTC 8049).